Reading from the N-terminus, the 1198-residue chain is Potassium/sodium hyperpolarization-activated cyclic nucleotide-gated channel 4 (1198 aa).

Over 1 to 266 (MDKLPPSMRK…PYSDFRFYWD (266 aa)) the chain is Cytoplasmic. Positions 25 to 183 (IMDEEEDGEE…PASASCEQPS (159 aa)) are disordered. A compositionally biased stretch (acidic residues) spans 26-36 (MDEEEDGEEEG). Over residues 105-118 (SRGGGSGGAGGGSS) the composition is skewed to gly residues. Positions 121–132 (HLHDSAEERRLI) are enriched in basic and acidic residues. A Phosphoserine modification is found at Ser139. Residues 164–174 (ASPPPQQPPQP) show a composition bias toward pro residues. The segment at 209-260 (GQSGFMQRQFGAMLQPGVNKFSLRMFGSQKAVEREQERVKSAGFWIIHPYSD) is involved in subunit assembly. A helical transmembrane segment spans residues 267-287 (LTMLLLMVGNLIIIPVGITFF). Residues 288-293 (KDENTT) are Extracellular-facing. The helical transmembrane segment at 294-314 (PWIVFNVVSDTFFLIDLVLNF) threads the bilayer. Residues 315–340 (RTGIVVEDNTEIILDPQRIKMKYLKS) are Cytoplasmic-facing. The helical transmembrane segment at 341–361 (WFVVDFISSIPVDYIFLIVET) threads the bilayer. Topologically, residues 362–368 (RIDSEVY) are extracellular. A helical; Voltage-sensor membrane pass occupies residues 369-389 (KTARALRIVRFTKILSLLRLL). Residues 390–420 (RLSRLIRYIHQWEEIFHMTYDLASAVVRIVN) lie on the Cytoplasmic side of the membrane. A helical transmembrane segment spans residues 421-441 (LIGMMLLLCHWDGCLQFLVPM). At 442 to 464 (LQDFPHDCWVSINGMVNNSWGKQ) the chain is on the extracellular side. A glycan (N-linked (GlcNAc...) asparagine) is linked at Asn458. An intramembrane region (pore-forming) is located at residues 465-486 (YSYALFKAMSHMLCIGYGRQAP). Residues 487–496 (VGMSDVWLTM) lie on the Extracellular side of the membrane. A helical membrane pass occupies residues 497-517 (LSMIVGATCYAMFIGHATALI). Over 518–1198 (QSLDSSRRQY…PVRSKLPSNL (681 aa)) the chain is Cytoplasmic. Residues Tyr559, Lys562, Phe564, and Glu566 each coordinate 3',5'-cyclic GMP. Residues Gly659, Glu660, Cys662, Arg669, Thr670, Val673, and Arg710 each contribute to the 3',5'-cyclic AMP site. Residues 804–1198 (AIFRPPPGPG…PVRSKLPSNL (395 aa)) are disordered. Composition is skewed to low complexity over residues 831–856 (SLIP…SSSS) and 866–880 (SAPP…SSSS). The span at 881-894 (SPPPGACSSPPAPT) shows a compositional bias: pro residues. Composition is skewed to low complexity over residues 895–905 (PSTSTAATTTG), 913–937 (LGGS…SPQA), and 965–985 (RSPS…SPGL). The segment covering 1027 to 1040 (GHSPGPPRTFPSAP) has biased composition (pro residues). The span at 1043–1054 (ASGSHGSLLLPP) shows a compositional bias: low complexity. Ser1103 and Ser1106 each carry phosphoserine. Residues 1120–1132 (AGGGSGSSGGLGP) are compositionally biased toward gly residues.

It belongs to the potassium channel HCN family. Homotetramer. The potassium channel is composed of a homo- or heterotetrameric complex of pore-forming subunits. Interacts with PEX5L with a 4:4 HCN4:PEX5L stoichiometry; reduces the effects of cAMP on the voltage-dependence and rate of activation. Interacts with IRAG1; regulates HCN4 channel activity. Interacts with IRAG2; regulates HCN4 channel activity. S-palmitoylated. Highly expressed in pyramidal and granule layer of the hippocampus, in thalamus anterior nucleus, in the supraoptic nucleus in hypothalamus, in cerebellum, and in trapezoid nuclei and superior olivary complex in the auditory system. Detected in a subset of elongated cells in taste buds.

Its subcellular location is the cell membrane. It catalyses the reaction K(+)(in) = K(+)(out). The catalysed reaction is Na(+)(in) = Na(+)(out). Its activity is regulated as follows. Activated by cAMP and at 100 times higher concentrationsand to a lesser extent by cGMP and cCMP. cAMP binding causes a conformation change that leads to the assembly of an active tetramer and channel opening. Binding of cAMP removes a tonic inhibition conferred by cyclic nucleotide-binding domain (CNBD) on channel opening. Cyclic dinucleotides can modulate HCN4 channel; cyclic dinucleotides acting as potent antagonists of cAMP. Inhibited by extracellular Cs(+) ions. Auxiliary subunits can also regulate HCN4 channel. IRAG1 causes a gain-of-function by shifting HCN4 activation to more depolarized membrane potentials in the absence of cAMP. In contrast, IRAG2 causes a loss-of-function by inhibiting cAMP-dependent potentiation of HCN4 activation. Functionally, hyperpolarization-activated ion channel that are permeable to Na(+) and K(+) ions with very slow activation and inactivation. Exhibits higher selectivity for K(+) over Na(+) ions. Contributes to the native pacemaker currents in heart (If) that regulate the rhythm of heart beat. Contributes to the native pacemaker currents in neurons (Ih). May mediate responses to sour stimuli. This chain is Potassium/sodium hyperpolarization-activated cyclic nucleotide-gated channel 4 (Hcn4), found in Rattus norvegicus (Rat).